Reading from the N-terminus, the 253-residue chain is 5-oxoprolinase subunit A (253 aa).

Belongs to the LamB/PxpA family. As to quaternary structure, forms a complex composed of PxpA, PxpB and PxpC.

It catalyses the reaction 5-oxo-L-proline + ATP + 2 H2O = L-glutamate + ADP + phosphate + H(+). Catalyzes the cleavage of 5-oxoproline to form L-glutamate coupled to the hydrolysis of ATP to ADP and inorganic phosphate. This chain is 5-oxoprolinase subunit A, found in Chloroflexus aurantiacus (strain ATCC 29364 / DSM 637 / Y-400-fl).